A 251-amino-acid chain; its full sequence is Fibroblast growth factor 23 (251 aa).

The signal sequence occupies residues 1-24 (MLGARLRLWVCALCSVCSMSVLRA). C95 and C113 are joined by a disulfide. O-linked (GalNAc) threonine glycosylation is found at T171 and T178. The interval 172–221 (PIPRRHTRSAEDDSERDPLNVLKPRARMTPAPASCSQELPSAEDNSPMAS) is disordered. A Phosphoserine; by FAM20C modification is found at S180. The segment covering 205–219 (SCSQELPSAEDNSPM) has biased composition (polar residues).

Belongs to the heparin-binding growth factors family. In terms of assembly, interacts with FGFR1, FGFR2, FGFR3 and FGFR4. Affinity between fibroblast growth factors (FGFs) and their receptors is increased by KL and heparan sulfate glycosaminoglycans that function as coreceptors. In terms of processing, following secretion this protein is inactivated by cleavage into a N-terminal fragment and a C-terminal fragment. The processing is effected by proprotein convertases. O-glycosylated at Thr-171 and Thr-178 by GALNT3 and glycosylation of Thr-178 requires previous glycosylation at Thr171. Glycosylation is necessary for secretion; it blocks processing by proprotein convertases when the O-glycan is alpha 2,6-sialylated. Competition between proprotein convertase cleavage and block of cleavage by O-glycosylation determines the level of secreted active FGF23. Post-translationally, phosphorylation at Ser-180 mediated by FAM20C slows down glycosylation at Thr-178 notably. Expressed in osteogenic cells particularly during phases of active bone remodeling. In adult trabecular bone, expressed in osteocytes and flattened bone-lining cells (inactive osteoblasts).

The protein localises to the secreted. Functionally, regulator of phosphate homeostasis. Inhibits renal tubular phosphate transport by reducing SLC34A1 levels. Up-regulates EGR1 expression in the presence of KL. Acts directly on the parathyroid to decrease PTH secretion. Regulator of vitamin-D metabolism. Negatively regulates osteoblast differentiation and matrix mineralization. The protein is Fibroblast growth factor 23 (FGF23) of Homo sapiens (Human).